The sequence spans 704 residues: Histone-lysine N-methyltransferase, H3 lysine-9 specific SUVH1 (704 aa).

Disordered stretches follow at residues 1–21 and 68–176; these read MEQG…TRVL and PFVA…QAEG. 2 stretches are compositionally biased toward polar residues: residues 80–90 and 109–121; these read ESSQQTPSGVP and SFRT…GNSG. Residues 159-170 show a composition bias toward basic residues; the sequence is GKKRGRPKKPRR. The region spanning 265–412 is the YDG domain; the sequence is GNAPGIEVGD…CNVFKYKLLR (148 aa). Residues 487–548 enclose the Pre-SET domain; the sequence is PSCHCVGGCQ…NCRNRMSQGG (62 aa). 9 residues coordinate Zn(2+): cysteine 489, cysteine 491, cysteine 495, cysteine 502, cysteine 504, cysteine 530, cysteine 534, cysteine 536, and cysteine 540. The 131-residue stretch at 551–681 folds into the SET domain; the sequence is ARLEVFKTKN…PMQELTFDYG (131 aa). S-adenosyl-L-methionine is bound by residues 561–563, aspartate 593, tyrosine 595, arginine 635, and 638–639; these read RGW and NH. Zn(2+) is bound by residues cysteine 641, cysteine 692, cysteine 694, and cysteine 699. The Post-SET domain maps to 688-704; sequence RRKKCLCGSLNCRGYFY.

It belongs to the class V-like SAM-binding methyltransferase superfamily. Histone-lysine methyltransferase family. Suvar3-9 subfamily. In terms of assembly, interacts with LHP1. Expressed in roots, stems, leaves and flowers.

The protein resides in the nucleus. The protein localises to the chromosome. The catalysed reaction is N(6)-methyl-L-lysyl(27)-[histone H3] + S-adenosyl-L-methionine = N(6),N(6)-dimethyl-L-lysyl(27)-[histone H3] + S-adenosyl-L-homocysteine + H(+). It catalyses the reaction L-lysyl(9)-[histone H3] + 2 S-adenosyl-L-methionine = N(6),N(6)-dimethyl-L-lysyl(9)-[histone H3] + 2 S-adenosyl-L-homocysteine + 2 H(+). The enzyme catalyses L-lysyl(27)-[histone H3] + S-adenosyl-L-methionine = N(6)-methyl-L-lysyl(27)-[histone H3] + S-adenosyl-L-homocysteine + H(+). Histone methyltransferase. Methylates in vitro both 'Lys-9' and 'Lys-27' of histone H3. Required for in vivo dimethylation of 'Lys-9'. H3 'Lys-9' methylation represents a specific tag for epigenetic control for plant development and transcriptional repression. The sequence is that of Histone-lysine N-methyltransferase, H3 lysine-9 specific SUVH1 (SUVH1) from Nicotiana tabacum (Common tobacco).